The primary structure comprises 427 residues: Adenylosuccinate synthetase (427 aa).

Residues 12 to 18 (GDEGKGK) and 40 to 42 (GHT) contribute to the GTP site. Asp-13 serves as the catalytic Proton acceptor. The Mg(2+) site is built by Asp-13 and Gly-40. IMP contacts are provided by residues 13–16 (DEGK), 38–41 (NAGH), Thr-128, Arg-142, Gln-223, Thr-238, and Arg-302. Residue His-41 is the Proton donor of the active site. 298–304 (TTTGRPR) contributes to the substrate binding site. GTP is bound by residues Arg-304, 330–332 (KLD), and 412–414 (AVG).

It belongs to the adenylosuccinate synthetase family. In terms of assembly, homodimer. Mg(2+) is required as a cofactor.

The protein resides in the cytoplasm. The catalysed reaction is IMP + L-aspartate + GTP = N(6)-(1,2-dicarboxyethyl)-AMP + GDP + phosphate + 2 H(+). It participates in purine metabolism; AMP biosynthesis via de novo pathway; AMP from IMP: step 1/2. In terms of biological role, plays an important role in the de novo pathway of purine nucleotide biosynthesis. Catalyzes the first committed step in the biosynthesis of AMP from IMP. This is Adenylosuccinate synthetase from Heliobacterium modesticaldum (strain ATCC 51547 / Ice1).